Consider the following 150-residue polypeptide: Endoribonuclease YbeY (150 aa).

3 residues coordinate Zn(2+): His112, His116, and His122.

The protein belongs to the endoribonuclease YbeY family. Requires Zn(2+) as cofactor.

It is found in the cytoplasm. Its function is as follows. Single strand-specific metallo-endoribonuclease involved in late-stage 70S ribosome quality control and in maturation of the 3' terminus of the 16S rRNA. The chain is Endoribonuclease YbeY from Bdellovibrio bacteriovorus (strain ATCC 15356 / DSM 50701 / NCIMB 9529 / HD100).